The primary structure comprises 430 residues: Serine--tRNA ligase (430 aa).

L-serine is bound at residue 237 to 239; it reads TAE. 268–270 contacts ATP; sequence RSE. An L-serine-binding site is contributed by Glu-291. 355 to 358 provides a ligand contact to ATP; it reads EISS. Ser-391 lines the L-serine pocket.

The protein belongs to the class-II aminoacyl-tRNA synthetase family. Type-1 seryl-tRNA synthetase subfamily. Homodimer. The tRNA molecule binds across the dimer.

It localises to the cytoplasm. The catalysed reaction is tRNA(Ser) + L-serine + ATP = L-seryl-tRNA(Ser) + AMP + diphosphate + H(+). The enzyme catalyses tRNA(Sec) + L-serine + ATP = L-seryl-tRNA(Sec) + AMP + diphosphate + H(+). The protein operates within aminoacyl-tRNA biosynthesis; selenocysteinyl-tRNA(Sec) biosynthesis; L-seryl-tRNA(Sec) from L-serine and tRNA(Sec): step 1/1. Its function is as follows. Catalyzes the attachment of serine to tRNA(Ser). Is also able to aminoacylate tRNA(Sec) with serine, to form the misacylated tRNA L-seryl-tRNA(Sec), which will be further converted into selenocysteinyl-tRNA(Sec). This Klebsiella pneumoniae subsp. pneumoniae (strain ATCC 700721 / MGH 78578) protein is Serine--tRNA ligase.